A 235-amino-acid chain; its full sequence is Ion-translocating oxidoreductase complex subunit E (235 aa).

The next 5 helical transmembrane spans lie at 63 to 83 (LGLGLATMLVLTCTNTVISLF), 93 to 113 (IPIYVMIIATTVTAVQLLMNA), 117 to 137 (TLYQSLGIFIPLIVTNCIIIG), 152 to 172 (IWDGFSMGLGMALSLTILGAL), and 206 to 226 (SFLLFILPPGAFIGLGLLLAI).

Belongs to the NqrDE/RnfAE family. The complex is composed of six subunits: RnfA, RnfB, RnfC, RnfD, RnfE and RnfG.

It is found in the cell inner membrane. Part of a membrane-bound complex that couples electron transfer with translocation of ions across the membrane. The sequence is that of Ion-translocating oxidoreductase complex subunit E from Haemophilus influenzae (strain ATCC 51907 / DSM 11121 / KW20 / Rd).